Consider the following 401-residue polypeptide: Argininosuccinate synthase (401 aa).

Residue 9-17 (AYSGGLDTS) participates in ATP binding. Tyrosine 86 serves as a coordination point for L-citrulline. Glycine 116 is a binding site for ATP. Positions 118, 122, and 123 each coordinate L-aspartate. Position 122 (asparagine 122) interacts with L-citrulline. Residues arginine 126, serine 174, serine 183, glutamate 259, and tyrosine 271 each coordinate L-citrulline.

It belongs to the argininosuccinate synthase family. Type 1 subfamily. As to quaternary structure, homotetramer.

Its subcellular location is the cytoplasm. The enzyme catalyses L-citrulline + L-aspartate + ATP = 2-(N(omega)-L-arginino)succinate + AMP + diphosphate + H(+). It participates in amino-acid biosynthesis; L-arginine biosynthesis; L-arginine from L-ornithine and carbamoyl phosphate: step 2/3. The polypeptide is Argininosuccinate synthase (Bacillus thuringiensis subsp. konkukian (strain 97-27)).